Consider the following 186-residue polypeptide: Interferon beta (186 aa).

A signal peptide spans 1 to 21 (MTYRWILPMALLLCFSTTALS). Tyrosine 24 is modified (phosphotyrosine). Cysteine 52 and cysteine 161 are joined by a disulfide. Residues asparagine 101 and asparagine 136 are each glycosylated (N-linked (GlcNAc...) asparagine).

Belongs to the alpha/beta interferon family. As to quaternary structure, monomer.

The protein localises to the secreted. In terms of biological role, type I interferon cytokine that plays a key role in the innate immune response to infection, developing tumors and other inflammatory stimuli. Signals via binding to high-affinity (IFNAR2) and low-affinity (IFNAR1) heterodimeric receptor, activating the canonical Jak-STAT signaling pathway resulting in transcriptional activation or repression of interferon-regulated genes that encode the effectors of the interferon response, such as antiviral proteins, regulators of cell proliferation and differentiation, and immunoregulatory proteins. Signals mostly via binding to a IFNAR1-IFNAR2 heterodimeric receptor, but can also function with IFNAR1 alone and independently of Jak-STAT pathways. Elicits a wide variety of responses, including antiviral and antibacterial activities, and can regulate the development of B-cells, myelopoiesis and lipopolysaccharide (LPS)-inducible production of tumor necrosis factor. Plays a role in neuronal homeostasis by regulating dopamine turnover and protecting dopaminergic neurons: acts by promoting neuronal autophagy and alpha-synuclein clearance, thereby preventing dopaminergic neuron loss. IFNB1 is more potent than interferon-alpha (IFN-alpha) in inducing the apoptotic and antiproliferative pathways required for control of tumor cell growth. This Equus caballus (Horse) protein is Interferon beta (IFNB1).